Here is a 296-residue protein sequence, read N- to C-terminus: 33 kDa chaperonin (296 aa).

2 disulfides stabilise this stretch: cysteine 238/cysteine 240 and cysteine 271/cysteine 274.

This sequence belongs to the HSP33 family. Under oxidizing conditions two disulfide bonds are formed involving the reactive cysteines. Under reducing conditions zinc is bound to the reactive cysteines and the protein is inactive.

It is found in the cytoplasm. Its function is as follows. Redox regulated molecular chaperone. Protects both thermally unfolding and oxidatively damaged proteins from irreversible aggregation. Plays an important role in the bacterial defense system toward oxidative stress. In Clostridium botulinum (strain 657 / Type Ba4), this protein is 33 kDa chaperonin.